Here is a 119-residue protein sequence, read N- to C-terminus: Ribonuclease P protein component (119 aa).

Belongs to the RnpA family. As to quaternary structure, consists of a catalytic RNA component (M1 or rnpB) and a protein subunit.

It catalyses the reaction Endonucleolytic cleavage of RNA, removing 5'-extranucleotides from tRNA precursor.. Its function is as follows. RNaseP catalyzes the removal of the 5'-leader sequence from pre-tRNA to produce the mature 5'-terminus. It can also cleave other RNA substrates such as 4.5S RNA. The protein component plays an auxiliary but essential role in vivo by binding to the 5'-leader sequence and broadening the substrate specificity of the ribozyme. The chain is Ribonuclease P protein component from Borreliella burgdorferi (strain ZS7) (Borrelia burgdorferi).